The following is a 393-amino-acid chain: Putative mitochondrial cysteine synthase (393 aa).

A helical membrane pass occupies residues 12-31 (LAWRECISIASVLIGAYASY). The residue at position 86 (Lys-86) is an N6-(pyridoxal phosphate)lysine. Residues 230–234 (GTGGT) and Ser-338 each bind pyridoxal 5'-phosphate.

This sequence belongs to the cysteine synthase/cystathionine beta-synthase family. Pyridoxal 5'-phosphate serves as cofactor.

The protein resides in the mitochondrion. Its subcellular location is the mitochondrion outer membrane. The catalysed reaction is O-acetyl-L-serine + hydrogen sulfide = L-cysteine + acetate. Putative cysteine synthase that catalyzes the conversion of O-acetyl-L-serine (OAS) into cysteine, the last step in the cysteine biosynthesis pathway. However, this CS-like protein is unlikely to function in cysteine biosynthesis. It seems that in S.cerevisiae cysteine biosynthesis occurs exclusively through the cystathionine pathway and not via direct incorporation of sulfur into OAS. In Saccharomyces cerevisiae (strain ATCC 204508 / S288c) (Baker's yeast), this protein is Putative mitochondrial cysteine synthase.